Here is a 170-residue protein sequence, read N- to C-terminus: Urease accessory protein UreE (170 aa).

Positions 144-170 (GGHSHDDHDHHHGHHEHDHEHHHHHHD) are disordered. Residues 146–162 (HSHDDHDHHHGHHEHDH) are compositionally biased toward basic and acidic residues.

It belongs to the UreE family.

It is found in the cytoplasm. In terms of biological role, involved in urease metallocenter assembly. Binds nickel. Probably functions as a nickel donor during metallocenter assembly. The protein is Urease accessory protein UreE of Brucella anthropi (strain ATCC 49188 / DSM 6882 / CCUG 24695 / JCM 21032 / LMG 3331 / NBRC 15819 / NCTC 12168 / Alc 37) (Ochrobactrum anthropi).